Here is a 210-residue protein sequence, read N- to C-terminus: UPF0301 protein Mnod_6933 (210 aa).

Belongs to the UPF0301 (AlgH) family.

This Methylobacterium nodulans (strain LMG 21967 / CNCM I-2342 / ORS 2060) protein is UPF0301 protein Mnod_6933.